A 269-amino-acid chain; its full sequence is MQRYFIYLAYDGTNYHGWQIQPNGSSVQECLMKALSTFLRRDVEVIGAGRTDAGVHASLMVAHFDHEDVLDTVTVADKLNRLLPPDISVYRVRQVKPDAHARFDATARTYKYYVTTAKYPFNRQYRYRVYGSLDYERMNEAARTLFEYIDFTSFSKLHTDVKTNICHISHAEWTKMEGEDTTWVFTIRADRFLRNMVRAIVGTLLEVGRGKLTVEGFRKVIEQQDRCKAGTSAPGNALFLVNVEYPEDIFSEETKKSVLSTLLPEGGEC.

The active-site Nucleophile is the Asp52. Substrate is bound at residue Tyr110.

The protein belongs to the tRNA pseudouridine synthase TruA family. Homodimer.

The catalysed reaction is uridine(38/39/40) in tRNA = pseudouridine(38/39/40) in tRNA. Functionally, formation of pseudouridine at positions 38, 39 and 40 in the anticodon stem and loop of transfer RNAs. This is tRNA pseudouridine synthase A from Bacteroides thetaiotaomicron (strain ATCC 29148 / DSM 2079 / JCM 5827 / CCUG 10774 / NCTC 10582 / VPI-5482 / E50).